The sequence spans 80 residues: Acyl carrier protein (80 aa).

Residues 4–79 form the Carrier domain; it reads NSIEEKVRSI…DVVAYIEKVQ (76 aa). Ser39 is subject to O-(pantetheine 4'-phosphoryl)serine.

The protein belongs to the acyl carrier protein (ACP) family. In terms of processing, 4'-phosphopantetheine is transferred from CoA to a specific serine of apo-ACP by AcpS. This modification is essential for activity because fatty acids are bound in thioester linkage to the sulfhydryl of the prosthetic group.

It is found in the cytoplasm. It functions in the pathway lipid metabolism; fatty acid biosynthesis. Functionally, carrier of the growing fatty acid chain in fatty acid biosynthesis. This is Acyl carrier protein from Akkermansia muciniphila (strain ATCC BAA-835 / DSM 22959 / JCM 33894 / BCRC 81048 / CCUG 64013 / CIP 107961 / Muc).